The sequence spans 67 residues: ATP synthase subunit c (67 aa).

The next 2 membrane-spanning stretches (helical) occupy residues 6 to 26 (ILALGIAVLGVSLGEGILVAN) and 46 to 66 (IMGVAFIEGTFFVLLASTFFV).

The protein belongs to the ATPase C chain family. As to quaternary structure, F-type ATPases have 2 components, F(1) - the catalytic core - and F(0) - the membrane proton channel. F(1) has five subunits: alpha(3), beta(3), gamma(1), delta(1), epsilon(1). F(0) has three main subunits: a(1), b(2) and c(10-14). The alpha and beta chains form an alternating ring which encloses part of the gamma chain. F(1) is attached to F(0) by a central stalk formed by the gamma and epsilon chains, while a peripheral stalk is formed by the delta and b chains.

The protein localises to the cell membrane. Its function is as follows. F(1)F(0) ATP synthase produces ATP from ADP in the presence of a proton or sodium gradient. F-type ATPases consist of two structural domains, F(1) containing the extramembraneous catalytic core and F(0) containing the membrane proton channel, linked together by a central stalk and a peripheral stalk. During catalysis, ATP synthesis in the catalytic domain of F(1) is coupled via a rotary mechanism of the central stalk subunits to proton translocation. Key component of the F(0) channel; it plays a direct role in translocation across the membrane. A homomeric c-ring of between 10-14 subunits forms the central stalk rotor element with the F(1) delta and epsilon subunits. The chain is ATP synthase subunit c from Streptococcus mutans serotype c (strain ATCC 700610 / UA159).